Here is a 356-residue protein sequence, read N- to C-terminus: Malate dehydrogenase, glyoxysomal (356 aa).

A glyoxysome-targeting transit peptide spans 1–36 (MQPIPDVNQRIARISAHLHPPKSQMEESSALRRANC). NAD(+) is bound by residues 51–57 (GAAGGIG) and D77. Substrate-binding residues include R124 and R130. NAD(+)-binding positions include N137 and 160–162 (ISN). Positions 162 and 196 each coordinate substrate. The active-site Proton acceptor is the H220. NAD(+) is bound at residue M271.

The protein belongs to the LDH/MDH superfamily. MDH type 1 family. Homodimer.

It localises to the glyoxysome. It carries out the reaction (S)-malate + NAD(+) = oxaloacetate + NADH + H(+). The chain is Malate dehydrogenase, glyoxysomal from Citrullus lanatus (Watermelon).